The sequence spans 197 residues: Large ribosomal subunit protein bL9 (197 aa).

Residues 178–197 are disordered; the sequence is GEFFDPEAQEDEAAAGETAQ. Positions 181-191 are enriched in acidic residues; sequence FDPEAQEDEAA.

The protein belongs to the bacterial ribosomal protein bL9 family.

In terms of biological role, binds to the 23S rRNA. The protein is Large ribosomal subunit protein bL9 of Bradyrhizobium sp. (strain BTAi1 / ATCC BAA-1182).